Reading from the N-terminus, the 465-residue chain is UDP-N-acetylmuramate--L-alanine ligase (465 aa).

112–118 provides a ligand contact to ATP; sequence GTHGKTT.

It belongs to the MurCDEF family.

Its subcellular location is the cytoplasm. It carries out the reaction UDP-N-acetyl-alpha-D-muramate + L-alanine + ATP = UDP-N-acetyl-alpha-D-muramoyl-L-alanine + ADP + phosphate + H(+). Its pathway is cell wall biogenesis; peptidoglycan biosynthesis. Cell wall formation. This is UDP-N-acetylmuramate--L-alanine ligase from Burkholderia cenocepacia (strain HI2424).